The following is a 523-amino-acid chain: 2-isopropylmalate synthase (523 aa).

Residues 5 to 267 (VIIFDTTLRD…HTAINHQEIW (263 aa)) form the Pyruvate carboxyltransferase domain. Residues D14, H202, H204, and N238 each contribute to the Mn(2+) site. Residues 392–523 (RLDYFSVQSG…QHNENNKETV (132 aa)) are regulatory domain.

This sequence belongs to the alpha-IPM synthase/homocitrate synthase family. LeuA type 1 subfamily. As to quaternary structure, homodimer. Mn(2+) is required as a cofactor.

The protein resides in the cytoplasm. It carries out the reaction 3-methyl-2-oxobutanoate + acetyl-CoA + H2O = (2S)-2-isopropylmalate + CoA + H(+). It functions in the pathway amino-acid biosynthesis; L-leucine biosynthesis; L-leucine from 3-methyl-2-oxobutanoate: step 1/4. Its function is as follows. Catalyzes the condensation of the acetyl group of acetyl-CoA with 3-methyl-2-oxobutanoate (2-ketoisovalerate) to form 3-carboxy-3-hydroxy-4-methylpentanoate (2-isopropylmalate). The sequence is that of 2-isopropylmalate synthase from Shigella sonnei (strain Ss046).